The following is a 341-amino-acid chain: Holliday junction branch migration complex subunit RuvB (341 aa).

Residues 1-182 form a large ATPase domain (RuvB-L) region; sequence MTDADPTLRP…FGIPTRLLFY (182 aa). ATP-binding positions include leucine 21, arginine 22, glycine 63, lysine 66, threonine 67, threonine 68, 129–131, arginine 172, tyrosine 182, and arginine 219; that span reads EDF. Residue threonine 67 participates in Mg(2+) binding. The segment at 183–253 is small ATPAse domain (RuvB-S); sequence TVDELFEIVS…LADHALTRLG (71 aa). The interval 256-341 is head domain (RuvB-H); it reads QLGLDGADRR…RPPGQSDLFG (86 aa). Residues arginine 292, arginine 311, and arginine 316 each contribute to the DNA site.

Belongs to the RuvB family. As to quaternary structure, homohexamer. Forms an RuvA(8)-RuvB(12)-Holliday junction (HJ) complex. HJ DNA is sandwiched between 2 RuvA tetramers; dsDNA enters through RuvA and exits via RuvB. An RuvB hexamer assembles on each DNA strand where it exits the tetramer. Each RuvB hexamer is contacted by two RuvA subunits (via domain III) on 2 adjacent RuvB subunits; this complex drives branch migration. In the full resolvosome a probable DNA-RuvA(4)-RuvB(12)-RuvC(2) complex forms which resolves the HJ.

It is found in the cytoplasm. It carries out the reaction ATP + H2O = ADP + phosphate + H(+). In terms of biological role, the RuvA-RuvB-RuvC complex processes Holliday junction (HJ) DNA during genetic recombination and DNA repair, while the RuvA-RuvB complex plays an important role in the rescue of blocked DNA replication forks via replication fork reversal (RFR). RuvA specifically binds to HJ cruciform DNA, conferring on it an open structure. The RuvB hexamer acts as an ATP-dependent pump, pulling dsDNA into and through the RuvAB complex. RuvB forms 2 homohexamers on either side of HJ DNA bound by 1 or 2 RuvA tetramers; 4 subunits per hexamer contact DNA at a time. Coordinated motions by a converter formed by DNA-disengaged RuvB subunits stimulates ATP hydrolysis and nucleotide exchange. Immobilization of the converter enables RuvB to convert the ATP-contained energy into a lever motion, pulling 2 nucleotides of DNA out of the RuvA tetramer per ATP hydrolyzed, thus driving DNA branch migration. The RuvB motors rotate together with the DNA substrate, which together with the progressing nucleotide cycle form the mechanistic basis for DNA recombination by continuous HJ branch migration. Branch migration allows RuvC to scan DNA until it finds its consensus sequence, where it cleaves and resolves cruciform DNA. The sequence is that of Holliday junction branch migration complex subunit RuvB from Ruegeria pomeroyi (strain ATCC 700808 / DSM 15171 / DSS-3) (Silicibacter pomeroyi).